A 414-amino-acid polypeptide reads, in one-letter code: Multifunctional CCA protein (414 aa).

ATP-binding residues include glycine 8 and arginine 11. CTP contacts are provided by glycine 8 and arginine 11. Positions 21 and 23 each coordinate Mg(2+). ATP is bound by residues arginine 91, arginine 137, and arginine 140. Positions 91, 137, and 140 each coordinate CTP. Positions 228 to 329 (TGIHTLLTLA…LKLLDTIDVW (102 aa)) constitute an HD domain.

It belongs to the tRNA nucleotidyltransferase/poly(A) polymerase family. Bacterial CCA-adding enzyme type 1 subfamily. Monomer. Can also form homodimers and oligomers. Requires Mg(2+) as cofactor. Ni(2+) is required as a cofactor.

It carries out the reaction a tRNA precursor + 2 CTP + ATP = a tRNA with a 3' CCA end + 3 diphosphate. The enzyme catalyses a tRNA with a 3' CCA end + 2 CTP + ATP = a tRNA with a 3' CCACCA end + 3 diphosphate. Catalyzes the addition and repair of the essential 3'-terminal CCA sequence in tRNAs without using a nucleic acid template. Adds these three nucleotides in the order of C, C, and A to the tRNA nucleotide-73, using CTP and ATP as substrates and producing inorganic pyrophosphate. tRNA 3'-terminal CCA addition is required both for tRNA processing and repair. Also involved in tRNA surveillance by mediating tandem CCA addition to generate a CCACCA at the 3' terminus of unstable tRNAs. While stable tRNAs receive only 3'-terminal CCA, unstable tRNAs are marked with CCACCA and rapidly degraded. This chain is Multifunctional CCA protein, found in Edwardsiella ictaluri (strain 93-146).